A 137-amino-acid polypeptide reads, in one-letter code: Large ribosomal subunit protein uL16 (137 aa).

This sequence belongs to the universal ribosomal protein uL16 family. In terms of assembly, part of the 50S ribosomal subunit.

Its function is as follows. Binds 23S rRNA and is also seen to make contacts with the A and possibly P site tRNAs. The polypeptide is Large ribosomal subunit protein uL16 (Sorangium cellulosum (strain So ce56) (Polyangium cellulosum (strain So ce56))).